A 641-amino-acid polypeptide reads, in one-letter code: 1-deoxy-D-xylulose-5-phosphate synthase (641 aa).

Residues histidine 79 and 120 to 122 (AHS) contribute to the thiamine diphosphate site. Aspartate 151 lines the Mg(2+) pocket. Residues 152-153 (GS), asparagine 180, tyrosine 290, and glutamate 372 contribute to the thiamine diphosphate site. Asparagine 180 contributes to the Mg(2+) binding site.

The protein belongs to the transketolase family. DXPS subfamily. Homodimer. Mg(2+) serves as cofactor. It depends on thiamine diphosphate as a cofactor.

The catalysed reaction is D-glyceraldehyde 3-phosphate + pyruvate + H(+) = 1-deoxy-D-xylulose 5-phosphate + CO2. It functions in the pathway metabolic intermediate biosynthesis; 1-deoxy-D-xylulose 5-phosphate biosynthesis; 1-deoxy-D-xylulose 5-phosphate from D-glyceraldehyde 3-phosphate and pyruvate: step 1/1. In terms of biological role, catalyzes the acyloin condensation reaction between C atoms 2 and 3 of pyruvate and glyceraldehyde 3-phosphate to yield 1-deoxy-D-xylulose-5-phosphate (DXP). In Rhodopseudomonas palustris (strain BisB18), this protein is 1-deoxy-D-xylulose-5-phosphate synthase.